A 275-amino-acid polypeptide reads, in one-letter code: Tryptophan synthase alpha chain (275 aa).

Catalysis depends on proton acceptor residues Glu49 and Asp60.

The protein belongs to the TrpA family. Tetramer of two alpha and two beta chains.

The enzyme catalyses (1S,2R)-1-C-(indol-3-yl)glycerol 3-phosphate + L-serine = D-glyceraldehyde 3-phosphate + L-tryptophan + H2O. It participates in amino-acid biosynthesis; L-tryptophan biosynthesis; L-tryptophan from chorismate: step 5/5. Its function is as follows. The alpha subunit is responsible for the aldol cleavage of indoleglycerol phosphate to indole and glyceraldehyde 3-phosphate. The protein is Tryptophan synthase alpha chain of Nitrosomonas europaea (strain ATCC 19718 / CIP 103999 / KCTC 2705 / NBRC 14298).